The following is a 541-amino-acid chain: MPPPLQAHRLLISHRRLPSPARRRFTAASSLQSAPATTLAPGPATSSILSIRESLLSGERTAADITSEYLSRLRRTEPSLRSFIHVADAAAEREAEELDRRIASGEKDAVGPLAGVLVGVKDNLCTANMPSTGGSRILDGYRPAYDATAVRRLQEAGAIVVGKTNLDEFGMGSTTEGSAFQVTTNPWDDSRVPGGSSGGSASAVSARQCVVSLGSDTGGSVRQPASFCGVVGLKPTYGRVSRFGLMAYASSLDVVGCFGSSVFDTATILSVVAGHDKMDSTSSSQVVPDYASELVSLDLLESKPLAGLRIGIIQETLGEGVANGVISSIKGAASHLEQLGSVVEEVSLPSFSLGLPAYYILASSEASSNLSRYDGIRYGRQFSADDLNELYGESRANGLGHEVKMRILMGTYALSAGYYDAYYKRAQQVRTLVKESFKDALERYDILISPAAPSAAYKIGEKINDPLAMYAGDILTVNVNLAGLPALVVPCGFVEGGPAGLPVGLQLIGSPFCEGNLLRVGHIFEQTLQNLSFVPPLLAES.

Residues lysine 121 and serine 196 each act as charge relay system in the active site. The Acyl-ester intermediate role is filled by serine 220.

Belongs to the amidase family. GatA subfamily. Subunit of the heterotrimeric GatCAB amidotransferase (AdT) complex, composed of A, B and C subunits.

It localises to the mitochondrion. It is found in the plastid. Its subcellular location is the chloroplast stroma. The enzyme catalyses L-glutamyl-tRNA(Gln) + L-glutamine + ATP + H2O = L-glutaminyl-tRNA(Gln) + L-glutamate + ADP + phosphate + H(+). Allows the formation of correctly charged Gln-tRNA(Gln) through the transamidation of misacylated Glu-tRNA(Gln) in chloroplasts and mitochondria. The reaction takes place in the presence of glutamine and ATP through an activated gamma-phospho-Glu-tRNA(Gln). The polypeptide is Glutamyl-tRNA(Gln) amidotransferase subunit A, chloroplastic/mitochondrial (Sorghum bicolor (Sorghum)).